The sequence spans 208 residues: Large ribosomal subunit protein bL25 (208 aa).

This sequence belongs to the bacterial ribosomal protein bL25 family. CTC subfamily. In terms of assembly, part of the 50S ribosomal subunit; part of the 5S rRNA/L5/L18/L25 subcomplex. Contacts the 5S rRNA. Binds to the 5S rRNA independently of L5 and L18.

Functionally, this is one of the proteins that binds to the 5S RNA in the ribosome where it forms part of the central protuberance. This Burkholderia pseudomallei (strain K96243) protein is Large ribosomal subunit protein bL25.